A 139-amino-acid polypeptide reads, in one-letter code: ATP synthase epsilon chain (139 aa).

It belongs to the ATPase epsilon chain family. F-type ATPases have 2 components, CF(1) - the catalytic core - and CF(0) - the membrane proton channel. CF(1) has five subunits: alpha(3), beta(3), gamma(1), delta(1), epsilon(1). CF(0) has three main subunits: a, b and c.

The protein localises to the cell inner membrane. Its function is as follows. Produces ATP from ADP in the presence of a proton gradient across the membrane. The protein is ATP synthase epsilon chain of Pseudomonas syringae pv. tomato (strain ATCC BAA-871 / DC3000).